Consider the following 204-residue polypeptide: Imidazoleglycerol-phosphate dehydratase (204 aa).

This sequence belongs to the imidazoleglycerol-phosphate dehydratase family.

It localises to the cytoplasm. It catalyses the reaction D-erythro-1-(imidazol-4-yl)glycerol 3-phosphate = 3-(imidazol-4-yl)-2-oxopropyl phosphate + H2O. Its pathway is amino-acid biosynthesis; L-histidine biosynthesis; L-histidine from 5-phospho-alpha-D-ribose 1-diphosphate: step 6/9. The sequence is that of Imidazoleglycerol-phosphate dehydratase from Rhodococcus opacus (strain B4).